The following is a 281-amino-acid chain: Protein ZAR1-like 1.L (281 aa).

A 3CxxC-type zinc finger spans residues 183–267 (QKYGFFHCKN…QELCGRCKGQ (85 aa)).

It belongs to the ZAR1 family. Component of a cytoplasmic ribonucleoprotein complex together with eif4enif1/4E-T and cpeb1. As to expression, expressed in oocytes.

The protein localises to the cytoplasm. It is found in the cytoplasmic ribonucleoprotein granule. Its function is as follows. mRNA-binding protein required for maternal mRNA storage, translation and degradation during oocyte maturation. Controls timing of meiosis during oogenesis. Probably promotes formation of some phase-separated membraneless compartment that stores maternal mRNAs in oocytes: acts by undergoing liquid-liquid phase separation upon binding to maternal mRNAs. Binds to the 3'-UTR of maternal mRNAs, inhibiting their translation. This chain is Protein ZAR1-like 1.L, found in Xenopus laevis (African clawed frog).